The chain runs to 239 residues: 1-(5-phosphoribosyl)-5-[(5-phosphoribosylamino)methylideneamino] imidazole-4-carboxamide isomerase (239 aa).

Aspartate 8 functions as the Proton acceptor in the catalytic mechanism. The Proton donor role is filled by aspartate 129.

It belongs to the HisA/HisF family.

Its subcellular location is the cytoplasm. The catalysed reaction is 1-(5-phospho-beta-D-ribosyl)-5-[(5-phospho-beta-D-ribosylamino)methylideneamino]imidazole-4-carboxamide = 5-[(5-phospho-1-deoxy-D-ribulos-1-ylimino)methylamino]-1-(5-phospho-beta-D-ribosyl)imidazole-4-carboxamide. Its pathway is amino-acid biosynthesis; L-histidine biosynthesis; L-histidine from 5-phospho-alpha-D-ribose 1-diphosphate: step 4/9. In Bacillus cereus (strain ZK / E33L), this protein is 1-(5-phosphoribosyl)-5-[(5-phosphoribosylamino)methylideneamino] imidazole-4-carboxamide isomerase.